Consider the following 84-residue polypeptide: Small ribosomal subunit protein uS17 (84 aa).

This sequence belongs to the universal ribosomal protein uS17 family. Part of the 30S ribosomal subunit.

One of the primary rRNA binding proteins, it binds specifically to the 5'-end of 16S ribosomal RNA. The sequence is that of Small ribosomal subunit protein uS17 from Clostridium botulinum (strain Eklund 17B / Type B).